A 23-amino-acid chain; its full sequence is Ocellatin-LB2 (23 aa).

Asparagine amide is present on Asn-23.

As to expression, expressed by the skin glands.

The protein resides in the secreted. Its function is as follows. Antibacterial peptide that inhibits the Gram-negative bacterium A.actinomycetemcomitans ATCC 29522 (MIC=210 uM). No activity against the bacteria E.coli ATCC 25922 and S.aureus ATCC 25923, or the fungi C.albicans ATCC 18804 and C.lusitaniae ATCC 56936. Does not show hemolytic activity towards rabbit erythrocytes. This is Ocellatin-LB2 from Leptodactylus labyrinthicus (Labyrinth frog).